Here is a 91-residue protein sequence, read N- to C-terminus: Sm-like protein LSM36B (91 aa).

The region spanning 14-86 is the Sm domain; the sequence is TPADFLKSIR…VLYISTTKGT (73 aa).

This sequence belongs to the snRNP Sm proteins family. Component of the heptameric LSM1-LSM7 complex that forms a seven-membered ring structure with a donut shape. The LSM subunits are arranged in the order LSM1, LSM2, LSM3, LSM6, LSM5, LSM7 and LSM4. Component of the heptameric LSM2-LSM8 complex that forms a seven-membered ring structure with a donut shape. The LSM subunits are arranged in the order LSM8, LSM2, LSM3, LSM6, LSM5, LSM7 and LSM4. LSM6B subunit interacts only with its two neighboring subunits, LSM3A or LSM3B and LSM5. As to expression, expressed in roots, leaves, stems, flowers and siliques.

Its subcellular location is the cytoplasm. It localises to the nucleus. Component of LSM protein complexes, which are involved in RNA processing. Component of the cytoplasmic LSM1-LSM7 complex which is involved in mRNA degradation by promoting decapping and leading to accurate 5'-3' mRNA decay. The cytoplasmic LSM1-LSM7 complex regulates developmental gene expression by the decapping of specific development-related transcripts. Component of the nuclear LSM2-LSM8 complex which is involved splicing nuclear mRNAs. LSM2-LSM8 binds directly to the U6 small nuclear RNAs (snRNAs) and is essential for accurate splicing of selected development-related mRNAs through the stabilization of the spliceosomal U6 snRNA. Plays a critical role in the regulation of development-related gene expression. This chain is Sm-like protein LSM36B, found in Arabidopsis thaliana (Mouse-ear cress).